Reading from the N-terminus, the 161-residue chain is MTNNEIIAATDGSSLANPGPSGWAWYVDENTWDSGGWDIATNNIAELTAVRELLIATRHTDRPILILSDSKYVINSLTKWVYSWKMRKWRKADGKPVLNQEIIQEIDSLMENRNIRMSWVNAHTGHPLNEAADSLARQAANNFSTRSAHIPGPGWTERSAK.

Residues 2-141 form the RNase H type-1 domain; sequence TNNEIIAATD…ADSLARQAAN (140 aa). Residues D11, E46, D69, and D133 each coordinate Mg(2+).

This sequence belongs to the RNase H family. Monomer. Mg(2+) serves as cofactor.

It is found in the cytoplasm. It catalyses the reaction Endonucleolytic cleavage to 5'-phosphomonoester.. Its function is as follows. Endonuclease that specifically degrades the RNA of RNA-DNA hybrids. The polypeptide is Ribonuclease H (Tropheryma whipplei (strain TW08/27) (Whipple's bacillus)).